The primary structure comprises 108 residues: Nucleoid-associated protein Rmet_2128 (108 aa).

Polar residues predominate over residues 86-96 (TTQEKMGSMTS). Residues 86-108 (TTQEKMGSMTSGLPLPPGFKLPF) are disordered. Over residues 99–108 (PLPPGFKLPF) the composition is skewed to pro residues.

The protein belongs to the YbaB/EbfC family. Homodimer.

The protein localises to the cytoplasm. Its subcellular location is the nucleoid. In terms of biological role, binds to DNA and alters its conformation. May be involved in regulation of gene expression, nucleoid organization and DNA protection. The polypeptide is Nucleoid-associated protein Rmet_2128 (Cupriavidus metallidurans (strain ATCC 43123 / DSM 2839 / NBRC 102507 / CH34) (Ralstonia metallidurans)).